We begin with the raw amino-acid sequence, 472 residues long: Probable low-salt glycan biosynthesis flippase Agl15 (472 aa).

13 consecutive transmembrane segments (helical) span residues 8-28 (IKLF…ITFF), 38-58 (GVFF…DFGL), 77-97 (SSAI…IVVF), 109-129 (FAVY…AVSV), 164-184 (AEAL…WGLS), 209-229 (VVSS…IGIF), 244-264 (VTAI…PQVS), 289-309 (LVIP…GIVF), 315-335 (IASY…VHVI), 354-374 (VISV…FGIV), 375-395 (GAAV…AHYL), 408-428 (IGWC…FKTL), and 434-454 (LIQL…ITLL).

The protein belongs to the AglR/Agl15 family.

It localises to the cell membrane. It functions in the pathway protein modification; protein glycosylation. It participates in cell surface structure biogenesis; S-layer biogenesis. Its function is as follows. Flippase involved in N-glycan biosynthetic pathway that takes place under low-salt conditions (1.75 M instead of 3.4 M). Participates in the formation of the tetrasaccharide present at 'Asn-532' of S-layer glycoprotein Csg, consisting of a sulfated hexose, 2 hexoses and rhamnose. Probably moves the tetrasaccharide from the cytosolic to the extracytosolic side of the membrane. The sequence is that of Probable low-salt glycan biosynthesis flippase Agl15 (agl15) from Haloferax volcanii (strain ATCC 29605 / DSM 3757 / JCM 8879 / NBRC 14742 / NCIMB 2012 / VKM B-1768 / DS2) (Halobacterium volcanii).